Reading from the N-terminus, the 288-residue chain is Probable syndecan (288 aa).

The signal sequence occupies residues 1-26; it reads MILKLNFCLSTYSVLILLSLSTQAFA. Residues 27–231 are Extracellular-facing; it reads ANQAKTKVVP…ETLANGFYAA (205 aa). The interval 67-175 is disordered; the sequence is EVNGSGYPTD…NIHNDEDFFT (109 aa). A glycan (N-linked (GlcNAc...) asparagine) is linked at asparagine 69. Residues serine 71 and serine 86 are each glycosylated (O-linked (Xyl...) (glycosaminoglycan) serine). Positions 89-104 are enriched in polar residues; sequence PPSSATTKSDKVTSPS. Low complexity predominate over residues 106–124; the sequence is AVVTAKPTTVPTTTASFKP. Positions 141 to 164 are enriched in acidic residues; that stretch reads VEEDEDDDEDEDEDDEDDEEDFAD. O-linked (Xyl...) (glycosaminoglycan) serine glycosylation occurs at serine 214. The chain crosses the membrane as a helical span at residues 232 to 252; that stretch reads IAGGVLVAVITAILLVLFVVF. Residues 253–288 lie on the Cytoplasmic side of the membrane; it reads RIRKKDEGSYALDEPKQARPYASYGYTKASTKEFYA.

It belongs to the syndecan proteoglycan family.

The protein resides in the membrane. The protein localises to the cell surface. It localises to the cell junction. It is found in the cytoplasm. In terms of biological role, cell surface proteoglycan that bears heparan sulfate. Required for correct mitotic spindle orientation of the ABar blastomere division plane and this may be through modulation of astral microtubule array, and in association with the wnt-signaling proteins mig-5 and dsh-2. Involved in the migration of AQR and PQR neurons, which descend from the Q neuroblasts. Promotes the axon guidance of D-type motor neurons. This chain is Probable syndecan, found in Caenorhabditis elegans.